A 133-amino-acid chain; its full sequence is Small ribosomal subunit protein uS8 (133 aa).

The protein belongs to the universal ribosomal protein uS8 family. Part of the 30S ribosomal subunit. Contacts proteins S5 and S12.

One of the primary rRNA binding proteins, it binds directly to 16S rRNA central domain where it helps coordinate assembly of the platform of the 30S subunit. This is Small ribosomal subunit protein uS8 from Endomicrobium trichonymphae.